A 163-amino-acid chain; its full sequence is SsrA-binding protein (163 aa).

The protein belongs to the SmpB family.

It localises to the cytoplasm. Its function is as follows. Required for rescue of stalled ribosomes mediated by trans-translation. Binds to transfer-messenger RNA (tmRNA), required for stable association of tmRNA with ribosomes. tmRNA and SmpB together mimic tRNA shape, replacing the anticodon stem-loop with SmpB. tmRNA is encoded by the ssrA gene; the 2 termini fold to resemble tRNA(Ala) and it encodes a 'tag peptide', a short internal open reading frame. During trans-translation Ala-aminoacylated tmRNA acts like a tRNA, entering the A-site of stalled ribosomes, displacing the stalled mRNA. The ribosome then switches to translate the ORF on the tmRNA; the nascent peptide is terminated with the 'tag peptide' encoded by the tmRNA and targeted for degradation. The ribosome is freed to recommence translation, which seems to be the essential function of trans-translation. The polypeptide is SsrA-binding protein (Corynebacterium diphtheriae (strain ATCC 700971 / NCTC 13129 / Biotype gravis)).